Reading from the N-terminus, the 94-residue chain is CRISPR-associated endoribonuclease Cas2 (94 aa).

Aspartate 10 contacts Mg(2+).

It belongs to the CRISPR-associated endoribonuclease Cas2 protein family. Homodimer, forms a heterotetramer with a Cas1 homodimer. Mg(2+) serves as cofactor.

In terms of biological role, CRISPR (clustered regularly interspaced short palindromic repeat), is an adaptive immune system that provides protection against mobile genetic elements (viruses, transposable elements and conjugative plasmids). CRISPR clusters contain sequences complementary to antecedent mobile elements and target invading nucleic acids. CRISPR clusters are transcribed and processed into CRISPR RNA (crRNA). Functions as a ssRNA-specific endoribonuclease. Involved in the integration of spacer DNA into the CRISPR cassette. The sequence is that of CRISPR-associated endoribonuclease Cas2 from Leptospira interrogans serogroup Icterohaemorrhagiae serovar Lai (strain 56601).